Reading from the N-terminus, the 364-residue chain is tRNA-specific 2-thiouridylase MnmA 2 (364 aa).

ATP is bound by residues 10 to 17 (GMSGGVDS) and methionine 36. Cysteine 106 functions as the Nucleophile in the catalytic mechanism. Cysteine 106 and cysteine 204 are disulfide-bonded. Residue glycine 130 participates in ATP binding. Positions 154–156 (KDQ) are interaction with tRNA. The Cysteine persulfide intermediate role is filled by cysteine 204. Residues 310–311 (RY) form an interaction with tRNA region.

This sequence belongs to the MnmA/TRMU family.

The protein localises to the cytoplasm. It catalyses the reaction S-sulfanyl-L-cysteinyl-[protein] + uridine(34) in tRNA + AH2 + ATP = 2-thiouridine(34) in tRNA + L-cysteinyl-[protein] + A + AMP + diphosphate + H(+). In terms of biological role, catalyzes the 2-thiolation of uridine at the wobble position (U34) of tRNA, leading to the formation of s(2)U34. In Thermoanaerobacter pseudethanolicus (strain ATCC 33223 / 39E) (Clostridium thermohydrosulfuricum), this protein is tRNA-specific 2-thiouridylase MnmA 2.